Here is a 916-residue protein sequence, read N- to C-terminus: DNA mismatch repair protein MutS (916 aa).

665–672 (GPNMAGKS) is a binding site for ATP.

Belongs to the DNA mismatch repair MutS family.

This protein is involved in the repair of mismatches in DNA. It is possible that it carries out the mismatch recognition step. This protein has a weak ATPase activity. The polypeptide is DNA mismatch repair protein MutS (Bradyrhizobium sp. (strain ORS 278)).